The chain runs to 1188 residues: DNA-directed RNA polymerase subunit beta (1188 aa).

It belongs to the RNA polymerase beta chain family. As to quaternary structure, the RNAP catalytic core consists of 2 alpha, 1 beta, 1 beta' and 1 omega subunit. When a sigma factor is associated with the core the holoenzyme is formed, which can initiate transcription.

The catalysed reaction is RNA(n) + a ribonucleoside 5'-triphosphate = RNA(n+1) + diphosphate. Functionally, DNA-dependent RNA polymerase catalyzes the transcription of DNA into RNA using the four ribonucleoside triphosphates as substrates. The chain is DNA-directed RNA polymerase subunit beta from Streptococcus pyogenes serotype M18 (strain MGAS8232).